A 227-amino-acid polypeptide reads, in one-letter code: Lipoprotein-releasing system ATP-binding protein LolD (227 aa).

Residues 6 to 227 (LEMRGITKSY…RLDAGQLSDV (222 aa)) form the ABC transporter domain. 43–50 (APSGAGKS) is a binding site for ATP.

The protein belongs to the ABC transporter superfamily. Lipoprotein translocase (TC 3.A.1.125) family. In terms of assembly, the complex is composed of two ATP-binding proteins (LolD) and two transmembrane proteins (LolC and LolE).

It is found in the cell inner membrane. In terms of biological role, part of the ABC transporter complex LolCDE involved in the translocation of mature outer membrane-directed lipoproteins, from the inner membrane to the periplasmic chaperone, LolA. Responsible for the formation of the LolA-lipoprotein complex in an ATP-dependent manner. The protein is Lipoprotein-releasing system ATP-binding protein LolD of Roseobacter denitrificans (strain ATCC 33942 / OCh 114) (Erythrobacter sp. (strain OCh 114)).